The sequence spans 332 residues: Beta-ketoacyl-[acyl-carrier-protein] synthase III (332 aa).

Active-site residues include Cys-116 and His-255. Residues 256-260 (QANLR) form an ACP-binding region. Asn-285 is an active-site residue.

This sequence belongs to the thiolase-like superfamily. FabH family. Homodimer.

The protein localises to the cytoplasm. It catalyses the reaction malonyl-[ACP] + acetyl-CoA + H(+) = 3-oxobutanoyl-[ACP] + CO2 + CoA. Its pathway is lipid metabolism; fatty acid biosynthesis. Catalyzes the condensation reaction of fatty acid synthesis by the addition to an acyl acceptor of two carbons from malonyl-ACP. Catalyzes the first condensation reaction which initiates fatty acid synthesis and may therefore play a role in governing the total rate of fatty acid production. Possesses both acetoacetyl-ACP synthase and acetyl transacylase activities. Its substrate specificity determines the biosynthesis of branched-chain and/or straight-chain of fatty acids. This Helicobacter hepaticus (strain ATCC 51449 / 3B1) protein is Beta-ketoacyl-[acyl-carrier-protein] synthase III.